The primary structure comprises 160 residues: Ribosomal RNA large subunit methyltransferase H (160 aa).

S-adenosyl-L-methionine is bound by residues leucine 76, glycine 108, and 127-132 (LGKMTW).

Belongs to the RNA methyltransferase RlmH family. Homodimer.

It is found in the cytoplasm. The enzyme catalyses pseudouridine(1915) in 23S rRNA + S-adenosyl-L-methionine = N(3)-methylpseudouridine(1915) in 23S rRNA + S-adenosyl-L-homocysteine + H(+). Functionally, specifically methylates the pseudouridine at position 1915 (m3Psi1915) in 23S rRNA. In Rhizobium leguminosarum bv. trifolii (strain WSM2304), this protein is Ribosomal RNA large subunit methyltransferase H.